Reading from the N-terminus, the 784-residue chain is LPS-assembly protein LptD (784 aa).

A signal peptide spans 1–24 (MKKRIPTLLATMIATALYSQQGLA). Disulfide bonds link cysteine 31-cysteine 724 and cysteine 173-cysteine 725.

This sequence belongs to the LptD family. In terms of assembly, component of the lipopolysaccharide transport and assembly complex. Interacts with LptE and LptA. Contains two intramolecular disulfide bonds.

Its subcellular location is the cell outer membrane. Together with LptE, is involved in the assembly of lipopolysaccharide (LPS) at the surface of the outer membrane. The sequence is that of LPS-assembly protein LptD from Shigella dysenteriae serotype 1 (strain Sd197).